A 122-amino-acid chain; its full sequence is uncharacterized protein (122 aa).

Residues 46–116 (KDLQKEVDDL…HQLENKRELN (71 aa)) are a coiled coil.

This is an uncharacterized protein from Invertebrate iridescent virus 6 (IIV-6).